Reading from the N-terminus, the 256-residue chain is Ethylene-responsive transcription factor ERF084 (256 aa).

A DNA-binding region (AP2/ERF) is located at residues 115–172 (GFMGVRKRPWGRWSAEIRDRIGRCRHWLGTFDTAEEAARAYDAAARRLRGTKAKTNFV).

This sequence belongs to the AP2/ERF transcription factor family. ERF subfamily.

The protein localises to the nucleus. Functionally, probably acts as a transcriptional activator. Binds to the GCC-box pathogenesis-related promoter element. May be involved in the regulation of gene expression by stress factors and by components of stress signal transduction pathways. The sequence is that of Ethylene-responsive transcription factor ERF084 (ERF084) from Arabidopsis thaliana (Mouse-ear cress).